Consider the following 398-residue polypeptide: L-methionine gamma-lyase (398 aa).

Pyridoxal 5'-phosphate is bound by residues 59–61 (YSR) and 89–90 (GM). Tyr114 contributes to the substrate binding site. 208-210 (SAT) is a pyridoxal 5'-phosphate binding site. An N6-(pyridoxal phosphate)lysine modification is found at Lys211. Arg375 contacts substrate.

Belongs to the trans-sulfuration enzymes family. L-methionine gamma-lyase subfamily. Homotetramer; dimer of active dimers. Pyridoxal 5'-phosphate serves as cofactor.

It catalyses the reaction L-methionine + H2O = methanethiol + 2-oxobutanoate + NH4(+). It carries out the reaction L-homocysteine + H2O = 2-oxobutanoate + hydrogen sulfide + NH4(+) + H(+). Irreversibly inactivated by DL-propargylglycine. Functionally, catalyzes the alpha,gamma-elimination of L-methionine to produce methanethiol, 2-oxobutanoate and ammonia. Is involved in L-methionine catabolism. In fact, shows a multicatalytic function since it also catalyzes gamma-replacement of L-methionine with thiol compounds, alpha,gamma-elimination and gamma-replacement reactions of L-homocysteine and its S-substituted derivatives, O-substituted-L-homoserines and DL-selenomethionine, and, to a lesser extent, alpha,beta-elimination and beta-replacement reactions of L-cysteine, S-methyl-L-cysteine, and O-acetyl-L-serine. Also catalyzes deamination and gamma-addition reactions of L-vinylglycine. Thus, the enzyme is able to cleave C-S, C-Se, and C-O bonds of sulfur, selenium, and oxygen amino acids, respectively. This is L-methionine gamma-lyase from Pseudomonas putida (Arthrobacter siderocapsulatus).